The following is a 1113-amino-acid chain: StAR-related lipid transfer protein 13 (1113 aa).

The residue at position 1 (Met-1) is an N-acetylmethionine. The SAM domain maps to 55-122 (QQEIEAKEAC…LNKCASMRLD (68 aa)). Disordered stretches follow at residues 164–218 (PVAD…HSAD), 230–256 (SSLPQSTREGLNQSFHPKNEKPTRTRA), and 308–343 (NGDLQTSPPAACRKGLPCSSKSSGESSPLENSSTVS). A compositionally biased stretch (polar residues) spans 179-188 (NTASSESVLT). Residues 197 to 214 (SIHSESSGGSDSRSQSGH) show a composition bias toward low complexity. The segment covering 230 to 245 (SSLPQSTREGLNQSFH) has biased composition (polar residues). The span at 322-340 (GLPCSSKSSGESSPLENSS) shows a compositional bias: low complexity. Ser-411 carries the phosphoserine modification. Composition is skewed to polar residues over residues 421-435 (SNGVNWRTGSISLGR) and 529-549 (PNQVTLDFEGNSVSEGRTTPS). Disordered regions lie at residues 421–443 (SNGVNWRTGSISLGRQQGPGMRE) and 514–578 (HSTL…GASL). A Rho-GAP domain is found at 663-868 (VPLIVHVQRT…HMITECNRLF (206 aa)). Positions 899–1109 (LAESGATFHT…SFQPLVAEGP (211 aa)) constitute an START domain.

In terms of assembly, homodimer. Interacts with TAX1BP1.

It is found in the cytoplasm. It localises to the membrane. The protein resides in the mitochondrion membrane. The protein localises to the lipid droplet. Its function is as follows. May function as a GTPase-activating protein. This Mus musculus (Mouse) protein is StAR-related lipid transfer protein 13 (Stard13).